Consider the following 255-residue polypeptide: Na(+)-translocating NADH-quinone reductase subunit C (255 aa).

Residues 12 to 32 (LFVVIALSLVCSIIVSTAAVG) traverse the membrane as a helical segment. FMN phosphoryl threonine is present on Thr-223.

Belongs to the NqrC family. Composed of six subunits; NqrA, NqrB, NqrC, NqrD, NqrE and NqrF. It depends on FMN as a cofactor.

Its subcellular location is the cell inner membrane. It carries out the reaction a ubiquinone + n Na(+)(in) + NADH + H(+) = a ubiquinol + n Na(+)(out) + NAD(+). NQR complex catalyzes the reduction of ubiquinone-1 to ubiquinol by two successive reactions, coupled with the transport of Na(+) ions from the cytoplasm to the periplasm. NqrA to NqrE are probably involved in the second step, the conversion of ubisemiquinone to ubiquinol. The polypeptide is Na(+)-translocating NADH-quinone reductase subunit C (Vibrio anguillarum (Listonella anguillarum)).